The following is a 356-amino-acid chain: Protein U8 (356 aa).

Belongs to the herpesviridae US22 family.

This Homo sapiens (Human) protein is Protein U8 (U8).